The following is a 352-amino-acid chain: Glycerol-1-phosphate dehydrogenase [NAD(P)+] (352 aa).

Residues 99–103 (GAKID) and 121–124 (TAPS) contribute to the NAD(+) site. A substrate-binding site is contributed by aspartate 126. Position 130 (serine 130) interacts with NAD(+). Aspartate 173 is a substrate binding site. Residues aspartate 173 and histidine 253 each contribute to the Zn(2+) site. Histidine 257 contacts substrate. Histidine 269 is a binding site for Zn(2+).

This sequence belongs to the glycerol-1-phosphate dehydrogenase family. It depends on Zn(2+) as a cofactor.

The protein resides in the cytoplasm. It catalyses the reaction sn-glycerol 1-phosphate + NAD(+) = dihydroxyacetone phosphate + NADH + H(+). It carries out the reaction sn-glycerol 1-phosphate + NADP(+) = dihydroxyacetone phosphate + NADPH + H(+). Its pathway is membrane lipid metabolism; glycerophospholipid metabolism. In terms of biological role, catalyzes the NAD(P)H-dependent reduction of dihydroxyacetonephosphate (DHAP or glycerone phosphate) to glycerol 1-phosphate (G1P). The G1P thus generated is used as the glycerophosphate backbone of phospholipids in the cellular membranes of Archaea. The protein is Glycerol-1-phosphate dehydrogenase [NAD(P)+] of Thermoplasma acidophilum (strain ATCC 25905 / DSM 1728 / JCM 9062 / NBRC 15155 / AMRC-C165).